The sequence spans 206 residues: MTTTAFAFVLAAYLIGSLSFAVIVSKAMGMADPRSYGSGNPGATNVLRTGKKLAAALTLLGDGAKGWVAVALASWLGPRYGLGEQGIALCALAVLFGHMWPVFFGFKGGKGVATAVGILFGINPWLALAALATWLFMAFVVKISSLSAIVACVLAPVYAFFILGPHSVYFGTCIIIAIVVVHRHKSNLIKLMTGQEDKIGNKGDAG.

6 helical membrane-spanning segments follow: residues 4–24 (TAFAFVLAAYLIGSLSFAVIV), 53–73 (LAAALTLLGDGAKGWVAVALA), 86–106 (GIALCALAVLFGHMWPVFFGF), 116–136 (VGILFGINPWLALAALATWLF), 137–157 (MAFVVKISSLSAIVACVLAPV), and 160–180 (FFILGPHSVYFGTCIIIAIVV).

It belongs to the PlsY family. As to quaternary structure, probably interacts with PlsX.

The protein resides in the cell inner membrane. The enzyme catalyses an acyl phosphate + sn-glycerol 3-phosphate = a 1-acyl-sn-glycero-3-phosphate + phosphate. It participates in lipid metabolism; phospholipid metabolism. In terms of biological role, catalyzes the transfer of an acyl group from acyl-phosphate (acyl-PO(4)) to glycerol-3-phosphate (G3P) to form lysophosphatidic acid (LPA). This enzyme utilizes acyl-phosphate as fatty acyl donor, but not acyl-CoA or acyl-ACP. This Chromobacterium violaceum (strain ATCC 12472 / DSM 30191 / JCM 1249 / CCUG 213 / NBRC 12614 / NCIMB 9131 / NCTC 9757 / MK) protein is Glycerol-3-phosphate acyltransferase.